The primary structure comprises 404 residues: Cysteine desulfurase IscS (404 aa).

Residues 75 to 76, asparagine 155, glutamine 183, and 203 to 205 contribute to the pyridoxal 5'-phosphate site; these read AT and SAH. Lysine 206 is subject to N6-(pyridoxal phosphate)lysine. Threonine 243 provides a ligand contact to pyridoxal 5'-phosphate. The active-site Cysteine persulfide intermediate is cysteine 328. Cysteine 328 is a [2Fe-2S] cluster binding site.

This sequence belongs to the class-V pyridoxal-phosphate-dependent aminotransferase family. NifS/IscS subfamily. In terms of assembly, homodimer. Forms a heterotetramer with IscU, interacts with other sulfur acceptors. Requires pyridoxal 5'-phosphate as cofactor.

The protein localises to the cytoplasm. The enzyme catalyses (sulfur carrier)-H + L-cysteine = (sulfur carrier)-SH + L-alanine. It functions in the pathway cofactor biosynthesis; iron-sulfur cluster biosynthesis. Master enzyme that delivers sulfur to a number of partners involved in Fe-S cluster assembly, tRNA modification or cofactor biosynthesis. Catalyzes the removal of elemental sulfur atoms from cysteine to produce alanine. Functions as a sulfur delivery protein for Fe-S cluster synthesis onto IscU, an Fe-S scaffold assembly protein, as well as other S acceptor proteins. The polypeptide is Cysteine desulfurase IscS (Photorhabdus laumondii subsp. laumondii (strain DSM 15139 / CIP 105565 / TT01) (Photorhabdus luminescens subsp. laumondii)).